We begin with the raw amino-acid sequence, 83 residues long: Weak toxin DE-1 homolog 1 (83 aa).

Residues 1–21 (MKPVLLTLVVVTIVCLDLGYT) form the signal peptide. Disulfide bonds link Cys-24–Cys-45, Cys-38–Cys-62, Cys-64–Cys-75, and Cys-76–Cys-81.

It belongs to the three-finger toxin family. Short-chain subfamily. Type I alpha-neurotoxin sub-subfamily. Expressed by the venom gland.

It localises to the secreted. In terms of biological role, binds to muscle nicotinic acetylcholine receptor (nAChR) and inhibit acetylcholine from binding to the receptor, thereby impairing neuromuscular transmission. This is Weak toxin DE-1 homolog 1 from Ophiophagus hannah (King cobra).